A 27-amino-acid polypeptide reads, in one-letter code: uncharacterized protein (27 aa).

The protein resides in the plastid. Its subcellular location is the chloroplast. This is an uncharacterized protein from Trieres chinensis (Marine centric diatom).